A 498-amino-acid chain; its full sequence is Glycerol kinase (498 aa).

Threonine 14 provides a ligand contact to ADP. Residues threonine 14, threonine 15, and serine 16 each coordinate ATP. Residue threonine 14 participates in sn-glycerol 3-phosphate binding. Arginine 18 is an ADP binding site. Arginine 84, glutamate 85, tyrosine 136, and aspartate 243 together coordinate sn-glycerol 3-phosphate. 5 residues coordinate glycerol: arginine 84, glutamate 85, tyrosine 136, aspartate 243, and glutamine 244. Residues threonine 265 and glycine 308 each coordinate ADP. Residues threonine 265, glycine 308, glutamine 312, and glycine 409 each contribute to the ATP site. ADP-binding residues include glycine 409 and asparagine 413.

It belongs to the FGGY kinase family.

It catalyses the reaction glycerol + ATP = sn-glycerol 3-phosphate + ADP + H(+). It functions in the pathway polyol metabolism; glycerol degradation via glycerol kinase pathway; sn-glycerol 3-phosphate from glycerol: step 1/1. Inhibited by fructose 1,6-bisphosphate (FBP). Its function is as follows. Key enzyme in the regulation of glycerol uptake and metabolism. Catalyzes the phosphorylation of glycerol to yield sn-glycerol 3-phosphate. The protein is Glycerol kinase of Shewanella frigidimarina (strain NCIMB 400).